Here is a 300-residue protein sequence, read N- to C-terminus: Transacylase cctO (300 aa).

A helical membrane pass occupies residues I52–I72. 2 consecutive short sequence motifs (HXXHC) follow at residues H185–C189 and H225–C229. N-linked (GlcNAc...) asparagine glycosylation occurs at N270.

This sequence belongs to the ustYa family.

Its subcellular location is the membrane. It participates in mycotoxin biosynthesis. In terms of biological role, transacylase; part of the gene cluster that mediates the biosynthesis of the mycotoxin cyclochlorotine, a hepatotoxic and carcinogenic cyclic chlorinated pentapeptide. Within the pathway, cctO catalyzes the intramolecular O,N-transacylation from isocyclochlorotine to cyclochlorotine. The NRPS cctN initially catalyzes the condensation of L-serine (Ser), Pro, L-2-aminobutyrate (2Abu), Ser, and beta-Phe in this order to produce isocyclotine. After the dichlorination of Pro2 catalyzed by cctP2 to produce isocyclochlorotine, the cctO-mediated transacylation of isocyclochlorotine can furnish cyclochlorotine. The subsequent hydroxylation of cyclochlorotine by cctR yields hydroxycyclochlorotine as the final product. CctP1 probably acts as a phenylalanine aminomutase and provides the uncommon building block beta-Phe. Furthermore, 2Abu can be synthesized from threonine by one of the threonine dehydratases and transaminases localized outside of the cluster. The functions of the remaining proteins encoded by the cluster, cctM and cctT, have not been identified yet. The chain is Transacylase cctO from Talaromyces islandicus (Penicillium islandicum).